The following is a 126-amino-acid chain: MNQRLSPIKVEVKTEYIEAQSTPDEEKYLFSYTITIINLGDQDVTLKSRYWCITDANGQQSEVEGAGVVGETPTIKPNTAYQYTSGTVLETPFGVMEGNYTMIKSNGEEFKAPISAFSLAVPGLLH.

One can recognise an ApaG domain in the interval 2–126; that stretch reads NQRLSPIKVE…FSLAVPGLLH (125 aa).

The protein is Protein ApaG of Shewanella piezotolerans (strain WP3 / JCM 13877).